A 435-amino-acid chain; its full sequence is MKRRASDRGAGETSARAKALGSGISGNNAKRAGPFILGPRLGNSPVPSIVQCLARKDGTDDFYQLKILTLEERGDQGIESQEERQGKMLLHTEYSLLSLLHTQDGVVHHHGLFQDRTCEIVEDTESSRMVKKMKKRICLVLDCLCAHDFSDKTADLINLQHYVIKEKRLSERETVVIFYDVVRVVEALHQKNIVHRDLKLGNMVLNKRTHRITITNFCLGKHPVSEGDLLKDQRGSPAYISPDVLSGRPYRGKPSDMWALGVVLFTMLYGQFPFYDSIPQELFRKIKAAEYTIPEDGRVSENTVCLIRKLLVLDPQQRLAAADVLEALSAIIASWQSLSSLSGPLQVVPDIDDQMSNADSSQEAKVTEECSQYEFENYMRQQLLLAEEKSSIHDARSWVPKRQFGSAPPVRRLGHDAQPMTSLDTAILAQRYLRK.

The span at 1 to 10 shows a compositional bias: basic and acidic residues; sequence MKRRASDRGA. The interval 1–25 is disordered; sequence MKRRASDRGAGETSARAKALGSGIS. One can recognise a Protein kinase domain in the interval 35–332; the sequence is FILGPRLGNS…DVLEALSAII (298 aa). Residues 41-49 and lysine 66 each bind ATP; that span reads LGNSPVPSI. The Proton acceptor role is filled by aspartate 197.

The protein belongs to the protein kinase superfamily. CAMK Ser/Thr protein kinase family.

The protein localises to the nucleus. It localises to the cytoplasm. The enzyme catalyses L-seryl-[protein] + ATP = O-phospho-L-seryl-[protein] + ADP + H(+). It carries out the reaction L-threonyl-[protein] + ATP = O-phospho-L-threonyl-[protein] + ADP + H(+). Its function is as follows. May be a negative regulator of NF-kappa-B and p53-mediated gene transcription. This is Serine/threonine-protein kinase 40 (STK40) from Pongo abelii (Sumatran orangutan).